A 250-amino-acid chain; its full sequence is tRNA-specific adenosine deaminase subunit TAD2 (250 aa).

Residues 1–119 (MQHIKHMRTA…ERFGGNGTVL (119 aa)) form the CMP/dCMP-type deaminase domain. H54 is a binding site for Zn(2+). The active-site Proton donor is the E56. Residues C88 and C91 each coordinate Zn(2+).

Belongs to the cytidine and deoxycytidylate deaminase family. ADAT2 subfamily. In terms of assembly, heterodimer with TAD3. Zn(2+) is required as a cofactor.

It localises to the cytoplasm. It is found in the nucleus. It catalyses the reaction adenosine(34) in tRNA + H2O + H(+) = inosine(34) in tRNA + NH4(+). Its function is as follows. Structural subunit of tRNA-specific adenosine deaminase, which deaminates adenosine-34 (the first, also called wobble position of the anticodon) to inosine in many tRNAs. Inosine-34 allows the decoding of 3 different nucleotides at the third position of mRNA codons, as inosine is able to pair with U, C, and A. The chain is tRNA-specific adenosine deaminase subunit TAD2 (TAD2) from Saccharomyces cerevisiae (strain ATCC 204508 / S288c) (Baker's yeast).